Here is a 161-residue protein sequence, read N- to C-terminus: Phosphopantetheine adenylyltransferase (161 aa).

Ser9 lines the substrate pocket. Residues Ser9–Phe10 and His17 contribute to the ATP site. The substrate site is built by Lys41, Thr73, and Arg87. ATP contacts are provided by residues Gly88 to Arg90, Glu98, and Phe123 to Thr129.

It belongs to the bacterial CoaD family. Homohexamer. Requires Mg(2+) as cofactor.

The protein resides in the cytoplasm. The enzyme catalyses (R)-4'-phosphopantetheine + ATP + H(+) = 3'-dephospho-CoA + diphosphate. It functions in the pathway cofactor biosynthesis; coenzyme A biosynthesis; CoA from (R)-pantothenate: step 4/5. Its function is as follows. Reversibly transfers an adenylyl group from ATP to 4'-phosphopantetheine, yielding dephospho-CoA (dPCoA) and pyrophosphate. The polypeptide is Phosphopantetheine adenylyltransferase (Chloroflexus aggregans (strain MD-66 / DSM 9485)).